The following is a 374-amino-acid chain: Fatty acid conjugase FAC2 A (374 aa).

2 consecutive transmembrane segments (helical) span residues 50 to 70 and 74 to 94; these read IIVT…LPGF and IVWP…WMIG. Residues 95–99 carry the Histidine box-1 motif; the sequence is HECGH. Positions 131–135 match the Histidine box-2 motif; that stretch reads HRNHH. 3 helical membrane passes run 168-188, 219-239, and 246-266; these read MGLM…YIMF, VLFS…IVMV, and FYVY…ATYL. The Histidine box-3 signature appears at 306-310; it reads HVIHH.

The protein belongs to the fatty acid desaturase type 1 family. As to expression, expressed exclusively in the developing seeds. Not detected in leaves or flower buds.

It localises to the microsome membrane. The enzyme catalyses a (9Z,12Z)-octadecadienoyl-containing glycerolipid + AH2 + O2 = a (8E,10E,12Z)-octadecatrienoyl-containing glycerolipid + A + 2 H2O. It functions in the pathway lipid metabolism; polyunsaturated fatty acid biosynthesis. In terms of biological role, fatty acid conjugase converting 18:2(9Z, 12Z) to calendic acid 18:3(8E, 10E, 12Z). Converts alpha-linolenic acid (18:3(9Z, 12Z, 15Z)) into 18:4(8E, 10E, 12Z, 15Z). Also has weak activity on the mono-unsaturates 16:1(9Z) and 18:1(9Z) producing two conjugated double bonds at delta(8) and delta(10) position. The protein is Fatty acid conjugase FAC2 A of Calendula officinalis (Pot marigold).